The primary structure comprises 295 residues: MEHLVDINDVESEEIEQLLDLAASMKENPGEFSGVMDNKSLVMLFAKPSTRTRLSFETGMTQLGGHGIFFEMGSSQLSRGEPISDVSQVMSRYEDAIMARLFEHDEMMELAENADVPVVNGLTDFLHPCQALTDMFTMQEKDRLDTLAFVGDGNNVAHSLMQASAKMGVDCRIATPEGMEPDEEIQDRVSDANVTVTNDPYEAVDGATAVYGDVFVSMGEEEQREEKLAEFDGFQIDQDLMDAARDDAIFMHCLPAHRGEEVTAEVADGPQSVIFDQAENRMHVQKAIVHTLVNQ.

Carbamoyl phosphate-binding positions include 49–52, Gln-76, Arg-100, and 127–130; these read STRT and HPCQ. Residues Asn-155, Asp-213, and 217–218 each bind L-ornithine; that span reads SM. Residues 253–254 and Arg-281 each bind carbamoyl phosphate; that span reads CL.

Belongs to the aspartate/ornithine carbamoyltransferase superfamily. OTCase family. In terms of assembly, homohexamer.

The protein resides in the cytoplasm. The catalysed reaction is carbamoyl phosphate + L-ornithine = L-citrulline + phosphate + H(+). It functions in the pathway amino-acid degradation; L-arginine degradation via ADI pathway; carbamoyl phosphate from L-arginine: step 2/2. With respect to regulation, arginine lead to a slight activation. Inhibited by all nucleotide phosphates. Functionally, reversibly catalyzes the transfer of the carbamoyl group from carbamoyl phosphate (CP) to the N(epsilon) atom of ornithine (ORN) to produce L-citrulline. The sequence is that of Ornithine carbamoyltransferase, catabolic (arcB) from Halobacterium salinarum (strain ATCC 700922 / JCM 11081 / NRC-1) (Halobacterium halobium).